Consider the following 259-residue polypeptide: MLPTSSPQIHRNGSLSERDAARHTAGAKRYKYLRRLLHFRQMDFEFAVWQMLYLFTSPQKVYRNFHYRKQTKDQWARDDPAFLVLLSIWLCVSTVGFGLVLDMGFVETLTLLLWVVFIDCIGVGLLISTLMWFVTNKYLMKHPNRDYDVEWGYAFDVHLNAFYPLLVILHFLQLFFINHVVVISSDWFLGYFVGNTMWLIAIGYYVYITFLGYSALPFLKNTVVLLYPFALLGLLYVLSISLGWNFTKGLCWFYKHRVQ.

Over residues 1–15 (MLPTSSPQIHRNGSL) the composition is skewed to polar residues. Residues 1–22 (MLPTSSPQIHRNGSLSERDAAR) are disordered. Topologically, residues 1 to 80 (MLPTSSPQIH…TKDQWARDDP (80 aa)) are cytoplasmic. A helical transmembrane segment spans residues 81–101 (AFLVLLSIWLCVSTVGFGLVL). At 102–110 (DMGFVETLT) the chain is on the lumenal side. The helical transmembrane segment at 111–131 (LLLWVVFIDCIGVGLLISTLM) threads the bilayer. The Cytoplasmic portion of the chain corresponds to 132 to 162 (WFVTNKYLMKHPNRDYDVEWGYAFDVHLNAF). A helical transmembrane segment spans residues 163–183 (YPLLVILHFLQLFFINHVVVI). The Lumenal segment spans residues 184–198 (SSDWFLGYFVGNTMW). A helical membrane pass occupies residues 199–219 (LIAIGYYVYITFLGYSALPFL). The Cytoplasmic segment spans residues 220–222 (KNT). A helical membrane pass occupies residues 223-243 (VVLLYPFALLGLLYVLSISLG). Residues 244 to 259 (WNFTKGLCWFYKHRVQ) are Lumenal-facing.

Belongs to the unc-50 family.

It localises to the nucleus inner membrane. Its subcellular location is the golgi apparatus membrane. Involved in the cell surface expression of neuronal nicotinic receptors. Binds RNA. This Danio rerio (Zebrafish) protein is Protein unc-50 homolog (unc50).